We begin with the raw amino-acid sequence, 233 residues long: Merozoite surface protein 1 (233 aa).

Residues 1–19 form the signal peptide; it reads MKIIFFLCSFLFFIINTQC. Polar residues predominate over residues 58–67; the sequence is SGTAVTTSTP. The tract at residues 58 to 110 is disordered; the sequence is SGTAVTTSTPGSKGSVASGGSGGSVASGGSVASGGSGNSRRTNPSDNSSDSDA. Positions 74–94 are enriched in gly residues; it reads ASGGSGGSVASGGSVASGGSG. The segment covering 95-107 has biased composition (polar residues); the sequence is NSRRTNPSDNSSD. An N-linked (GlcNAc...) asparagine glycan is attached at asparagine 104.

As to quaternary structure, forms a complex composed of subunits p83, p30, p38, and p42 which remain non-covalently associated; the complex is formed at the merozoite surface prior to egress from host erythrocytes. Forms a complex composed of processed MSP1 subunits, MSP6 subunit p36 and MSP7; the complex is formed at the merozoite surface prior to egress from host erythrocytes. Within the complex, interacts (via subunit p38) with MSP6 subunit p36 and (via subunits p83, p30 and p38) with MSP7 (via subunit p22). Forms a complex composed of MSP1, MSP6, DBLMSP1 and DBLMSP2. Within the complex, interacts (via subunit p38) with DBLMSP1 and DBLMSP2. Forms a complex composed of MSP1, and rhoptry proteins RhopH3, RAP1 and CLAG9/RhopH3. Within the complex, interacts (via subunits p42 and p19) with RhopH3 (via C-terminus). Forms a complex composed of MSP1, MSP6, MSP7, MSP9 and MSP3; within the complex, MSP6 and MSP9 mediate the binding to the host erythrocyte. Interacts (via subunits p19 and p42) with MSP9; the interaction is direct; MSP1 subunits p19 or p42, and MSP9 form a co-ligand complex that interacts with host SLC4A1/Band 3 protein. May interact with PFD6. Interacts with host spectrin. The p190 precursor is cleaved by SUB1 prior to merozoite egress into 4 subunits p83, p30, p38, and p42 which remain non-covalently associated. SUB1-mediated proteolytic cleavage occurs in an orderly manner; the first cleavage occurs at the p83/p30 site, followed by cleavage at the p30/p38 site, the last cleavage occurs at the p38/p42 site. The order of cleavage is essential for parasite viability. SUB1-mediated processing is essential for merozoite egress. In a second processing step during erythrocyte invasion, p42 is cleaved by SUB2 into p33 and p19; the latter remains attached to the merozoite surface via its GPI-anchor and stays on the surface during the subsequent ring stage.

It is found in the cell membrane. Its subcellular location is the secreted. Functionally, during the asexual blood stage, involved in merozoite egress from host erythrocytes possibly via its interaction with the host cytoskeleton protein spectrin resulting in the destabilization of the host cytoskeleton and thus leading to erythrocyte cell membrane rupture. Involved in the binding to host erythrocytes and is required for host erythrocyte invasion. This chain is Merozoite surface protein 1, found in Plasmodium falciparum (isolate CDC / Honduras).